The following is a 100-amino-acid chain: MDLSKYLTVSMILFLLGIWGIFLNRKNIIVMLMSIELMLLAVNLNFLLFSVYIDDCIGQLFALLILTVAAAESAIGLALLVVYYRIRGTIAVEFINLMKG.

3 helical membrane passes run 3–23 (LSKY…GIFL), 28–48 (IIVM…NFLL), and 61–81 (FALL…ALLV).

It belongs to the complex I subunit 4L family. In terms of assembly, complex I is composed of about 45 different subunits.

The protein localises to the mitochondrion membrane. The catalysed reaction is a ubiquinone + NADH + 5 H(+)(in) = a ubiquinol + NAD(+) + 4 H(+)(out). Core subunit of the mitochondrial membrane respiratory chain NADH dehydrogenase (Complex I) that is believed to belong to the minimal assembly required for catalysis. Complex I functions in the transfer of electrons from NADH to the respiratory chain. The immediate electron acceptor for the enzyme is believed to be ubiquinone. The polypeptide is NADH-ubiquinone oxidoreductase chain 4L (ND4L) (Prototheca wickerhamii).